Consider the following 78-residue polypeptide: MNDAGMGRFEGSYLGDRGRLAADARLECKICWWEYDPEVGDPVWQIAPGTSFSALPAHWRCPNCDGEAEQFMVLGPQA.

A Rubredoxin-like domain is found at 23-74; it reads DARLECKICWWEYDPEVGDPVWQIAPGTSFSALPAHWRCPNCDGEAEQFMVL. Residues Cys-28, Cys-31, Cys-61, and Cys-64 each coordinate Fe cation.

Belongs to the rubredoxin family. It depends on Fe(3+) as a cofactor.

In terms of biological role, rubredoxin is a small nonheme, iron protein lacking acid-labile sulfide. Its single Fe, chelated to 4 Cys, functions as an electron acceptor and may also stabilize the conformation of the molecule. Could be involved in hydrogenase-linked redox processes. The chain is Rubredoxin (hoxR) from Cupriavidus necator (strain ATCC 17699 / DSM 428 / KCTC 22496 / NCIMB 10442 / H16 / Stanier 337) (Ralstonia eutropha).